The sequence spans 622 residues: Chaperone protein HtpG (622 aa).

Residues 1 to 334 are a; substrate-binding; that stretch reads MKGQETRGFQ…SNDLPLNVSR (334 aa). The interval 335-550 is b; that stretch reads EILQDSRITQ…ADEMSTQMAK (216 aa). The interval 551–622 is c; the sequence is LFAAAGQQAP…IRRMNQLLTA (72 aa).

The protein belongs to the heat shock protein 90 family. Homodimer.

It localises to the cytoplasm. Functionally, molecular chaperone. Has ATPase activity. This Yersinia pestis protein is Chaperone protein HtpG.